The sequence spans 245 residues: MIDVIMTGELLKTVTRAIVALVSEARIHFLEKGLHSRAVDPANVAMVIVDIPKDSFEVYNIDEEKTIGVDMDRIFDISKSISTKDLVELIVEDESTLKVKFGSVEYKVALIDPSAIRKEPRIPELELPAKIVMDAGEFKKAIAAADKISDQVIFRSDKEGFRIEAKGDVDSIVFHMTETELIEFNGGEARSMFSVDYLKEFCKVAGSGDLLTIHLGTNYPVRLVFELVGGRAKVEYILAPRIESE.

It belongs to the PCNA family. As to quaternary structure, homotrimer. The subunits circularize to form a toroid; DNA passes through its center. Replication factor C (RFC) is required to load the toroid on the DNA.

Sliding clamp subunit that acts as a moving platform for DNA processing. Responsible for tethering the catalytic subunit of DNA polymerase and other proteins to DNA during high-speed replication. This Archaeoglobus fulgidus (strain ATCC 49558 / DSM 4304 / JCM 9628 / NBRC 100126 / VC-16) protein is DNA polymerase sliding clamp.